The following is a 20-amino-acid chain: Cytochrome c oxidase subunit 8B, mitochondrial (20 aa).

The segment at Leu-1–Thr-20 is disordered.

It belongs to the cytochrome c oxidase VIII family. Component of the cytochrome c oxidase (complex IV, CIV), a multisubunit enzyme composed of 14 subunits. The complex is composed of a catalytic core of 3 subunits MT-CO1, MT-CO2 and MT-CO3, encoded in the mitochondrial DNA, and 11 supernumerary subunits COX4I, COX5A, COX5B, COX6A, COX6B, COX6C, COX7A, COX7B, COX7C, COX8 and NDUFA4, which are encoded in the nuclear genome. The complex exists as a monomer or a dimer and forms supercomplexes (SCs) in the inner mitochondrial membrane with NADH-ubiquinone oxidoreductase (complex I, CI) and ubiquinol-cytochrome c oxidoreductase (cytochrome b-c1 complex, complex III, CIII), resulting in different assemblies (supercomplex SCI(1)III(2)IV(1) and megacomplex MCI(2)III(2)IV(2)).

It localises to the mitochondrion inner membrane. Its pathway is energy metabolism; oxidative phosphorylation. In terms of biological role, component of the cytochrome c oxidase, the last enzyme in the mitochondrial electron transport chain which drives oxidative phosphorylation. The respiratory chain contains 3 multisubunit complexes succinate dehydrogenase (complex II, CII), ubiquinol-cytochrome c oxidoreductase (cytochrome b-c1 complex, complex III, CIII) and cytochrome c oxidase (complex IV, CIV), that cooperate to transfer electrons derived from NADH and succinate to molecular oxygen, creating an electrochemical gradient over the inner membrane that drives transmembrane transport and the ATP synthase. Cytochrome c oxidase is the component of the respiratory chain that catalyzes the reduction of oxygen to water. Electrons originating from reduced cytochrome c in the intermembrane space (IMS) are transferred via the dinuclear copper A center (CU(A)) of subunit 2 and heme A of subunit 1 to the active site in subunit 1, a binuclear center (BNC) formed by heme A3 and copper B (CU(B)). The BNC reduces molecular oxygen to 2 water molecules using 4 electrons from cytochrome c in the IMS and 4 protons from the mitochondrial matrix. This Oncorhynchus mykiss (Rainbow trout) protein is Cytochrome c oxidase subunit 8B, mitochondrial.